We begin with the raw amino-acid sequence, 598 residues long: Elongation factor 4 (598 aa).

Residues 4–186 enclose the tr-type G domain; that stretch reads INIRNFAIIA…AIVSRLPAPS (183 aa). GTP-binding positions include 16–21 and 133–136; these read DHGKST and NKID.

It belongs to the TRAFAC class translation factor GTPase superfamily. Classic translation factor GTPase family. LepA subfamily.

Its subcellular location is the cell inner membrane. It catalyses the reaction GTP + H2O = GDP + phosphate + H(+). Required for accurate and efficient protein synthesis under certain stress conditions. May act as a fidelity factor of the translation reaction, by catalyzing a one-codon backward translocation of tRNAs on improperly translocated ribosomes. Back-translocation proceeds from a post-translocation (POST) complex to a pre-translocation (PRE) complex, thus giving elongation factor G a second chance to translocate the tRNAs correctly. Binds to ribosomes in a GTP-dependent manner. The polypeptide is Elongation factor 4 (Ehrlichia ruminantium (strain Welgevonden)).